The primary structure comprises 849 residues: Protein translocase subunit SecA (849 aa).

ATP contacts are provided by residues Q85, 103–107 (GEGKT), and D493. The Zn(2+) site is built by C832, C834, C843, and H844.

The protein belongs to the SecA family. In terms of assembly, monomer and homodimer. Part of the essential Sec protein translocation apparatus which comprises SecA, SecYEG and auxiliary proteins SecDF. Other proteins may also be involved. Zn(2+) serves as cofactor.

It localises to the cell membrane. It is found in the cytoplasm. It catalyses the reaction ATP + H2O + cellular proteinSide 1 = ADP + phosphate + cellular proteinSide 2.. Part of the Sec protein translocase complex. Interacts with the SecYEG preprotein conducting channel. Has a central role in coupling the hydrolysis of ATP to the transfer of proteins into and across the cell membrane, serving as an ATP-driven molecular motor driving the stepwise translocation of polypeptide chains across the membrane. The protein is Protein translocase subunit SecA of Streptococcus thermophilus (strain CNRZ 1066).